Here is a 347-residue protein sequence, read N- to C-terminus: NADH-ubiquinone oxidoreductase chain 2 (347 aa).

A run of 10 helical transmembrane segments spans residues 13-33 (IILG…WIGF), 59-79 (YFLT…TNLL), 96-116 (AVMT…FWVP), 122-142 (IPLS…LSVL), 149-169 (VSPT…GWGG), 178-198 (ILAY…AYNP), 201-221 (TLLN…LFMF), 247-267 (IMLS…WMII), 274-294 (ESLL…YFYM), and 323-343 (VPLL…APAL).

It belongs to the complex I subunit 2 family. As to quaternary structure, core subunit of respiratory chain NADH dehydrogenase (Complex I) which is composed of 45 different subunits. Interacts with TMEM242.

Its subcellular location is the mitochondrion inner membrane. The enzyme catalyses a ubiquinone + NADH + 5 H(+)(in) = a ubiquinol + NAD(+) + 4 H(+)(out). Functionally, core subunit of the mitochondrial membrane respiratory chain NADH dehydrogenase (Complex I) which catalyzes electron transfer from NADH through the respiratory chain, using ubiquinone as an electron acceptor. Essential for the catalytic activity and assembly of complex I. In Megaderma spasma (Lesser false vampire bat), this protein is NADH-ubiquinone oxidoreductase chain 2.